A 433-amino-acid chain; its full sequence is Xylose isomerase (433 aa).

Residues histidine 99 and aspartate 102 contribute to the active site. Residues glutamate 230, glutamate 266, histidine 269, aspartate 294, aspartate 305, aspartate 307, and aspartate 337 each coordinate Mg(2+).

This sequence belongs to the xylose isomerase family. As to quaternary structure, homotetramer. It depends on Mg(2+) as a cofactor.

The protein resides in the cytoplasm. It carries out the reaction alpha-D-xylose = alpha-D-xylulofuranose. The polypeptide is Xylose isomerase (Roseobacter denitrificans (strain ATCC 33942 / OCh 114) (Erythrobacter sp. (strain OCh 114))).